The following is a 132-amino-acid chain: Regulator of ribonuclease activity B (132 aa).

The protein belongs to the RraB family. In terms of assembly, interacts with the C-terminal region of Rne.

The protein localises to the cytoplasm. Its function is as follows. Globally modulates RNA abundance by binding to RNase E (Rne) and regulating its endonucleolytic activity. Can modulate Rne action in a substrate-dependent manner by altering the composition of the degradosome. This Alteromonas mediterranea (strain DSM 17117 / CIP 110805 / LMG 28347 / Deep ecotype) protein is Regulator of ribonuclease activity B.